Here is a 453-residue protein sequence, read N- to C-terminus: Bifunctional protein GlmU (453 aa).

The segment at 1–225 (MNIVILAAGT…GWETLGVNSK (225 aa)) is pyrophosphorylase. UDP-N-acetyl-alpha-D-glucosamine-binding positions include 6 to 9 (LAAG), Lys20, Gln71, 76 to 77 (GT), 98 to 100 (YGD), Gly135, Glu150, Asn165, and Asn223. Asp100 is a binding site for Mg(2+). Asn223 is a Mg(2+) binding site. Positions 226–246 (AQLAELERIHQRNLADALLAA) are linker. Residues 247-453 (GVTLADPARI…GYVRPVKKKS (207 aa)) are N-acetyltransferase. UDP-N-acetyl-alpha-D-glucosamine contacts are provided by Arg329 and Lys347. His359 (proton acceptor) is an active-site residue. UDP-N-acetyl-alpha-D-glucosamine is bound by residues Tyr362 and Asn373. Acetyl-CoA-binding positions include Ala376, 382–383 (NY), Ser401, and Ala419.

In the N-terminal section; belongs to the N-acetylglucosamine-1-phosphate uridyltransferase family. This sequence in the C-terminal section; belongs to the transferase hexapeptide repeat family. As to quaternary structure, homotrimer. Requires Mg(2+) as cofactor.

It is found in the cytoplasm. It carries out the reaction alpha-D-glucosamine 1-phosphate + acetyl-CoA = N-acetyl-alpha-D-glucosamine 1-phosphate + CoA + H(+). The enzyme catalyses N-acetyl-alpha-D-glucosamine 1-phosphate + UTP + H(+) = UDP-N-acetyl-alpha-D-glucosamine + diphosphate. It participates in nucleotide-sugar biosynthesis; UDP-N-acetyl-alpha-D-glucosamine biosynthesis; N-acetyl-alpha-D-glucosamine 1-phosphate from alpha-D-glucosamine 6-phosphate (route II): step 2/2. Its pathway is nucleotide-sugar biosynthesis; UDP-N-acetyl-alpha-D-glucosamine biosynthesis; UDP-N-acetyl-alpha-D-glucosamine from N-acetyl-alpha-D-glucosamine 1-phosphate: step 1/1. It functions in the pathway bacterial outer membrane biogenesis; LPS lipid A biosynthesis. In terms of biological role, catalyzes the last two sequential reactions in the de novo biosynthetic pathway for UDP-N-acetylglucosamine (UDP-GlcNAc). The C-terminal domain catalyzes the transfer of acetyl group from acetyl coenzyme A to glucosamine-1-phosphate (GlcN-1-P) to produce N-acetylglucosamine-1-phosphate (GlcNAc-1-P), which is converted into UDP-GlcNAc by the transfer of uridine 5-monophosphate (from uridine 5-triphosphate), a reaction catalyzed by the N-terminal domain. This Burkholderia pseudomallei (strain K96243) protein is Bifunctional protein GlmU.